We begin with the raw amino-acid sequence, 113 residues long: Ribonuclease P protein component (113 aa).

Belongs to the RnpA family. Consists of a catalytic RNA component (M1 or rnpB) and a protein subunit.

It catalyses the reaction Endonucleolytic cleavage of RNA, removing 5'-extranucleotides from tRNA precursor.. Functionally, RNaseP catalyzes the removal of the 5'-leader sequence from pre-tRNA to produce the mature 5'-terminus. It can also cleave other RNA substrates such as 4.5S RNA. The protein component plays an auxiliary but essential role in vivo by binding to the 5'-leader sequence and broadening the substrate specificity of the ribozyme. In Ureaplasma parvum serovar 3 (strain ATCC 27815 / 27 / NCTC 11736), this protein is Ribonuclease P protein component.